An 812-amino-acid polypeptide reads, in one-letter code: Valine--tRNA ligase (812 aa).

The 'HIGH' region signature appears at 46-56 (PTVSGQLHIGH). A 'KMSKS' region motif is present at residues 536–540 (KMSKS). An ATP-binding site is contributed by Lys539.

It belongs to the class-I aminoacyl-tRNA synthetase family. ValS type 2 subfamily. Monomer.

Its subcellular location is the cytoplasm. The catalysed reaction is tRNA(Val) + L-valine + ATP = L-valyl-tRNA(Val) + AMP + diphosphate. Its function is as follows. Catalyzes the attachment of valine to tRNA(Val). As ValRS can inadvertently accommodate and process structurally similar amino acids such as threonine, to avoid such errors, it has a 'posttransfer' editing activity that hydrolyzes mischarged Thr-tRNA(Val) in a tRNA-dependent manner. This is Valine--tRNA ligase from Rickettsia bellii (strain OSU 85-389).